The chain runs to 352 residues: MLELNFSQTLGTHCLTLNETLPASGITAIFGVSGAGKTSLINAISGLTRPRKGRIVLNGRVLHDAENGICLTPEKRRIGYVFQDARLFPHYKVRGNLRYGMAKSMTGQFDKLVSLLGIEALLDRLPGSLSGGEKQRVAIGRALLTAPELLLLDEPLASLDIPRKRELLPYLQRLAREINIPMLYVSHSLDEILHLADKVMVLEDGQVKAFGPLEEVWGSSVMHPWLPKEQQSSILKVSVLEHHPHYAMTALALGDQHLWVNKLNQPLQSTLRIRIQASDVSLVLQPPQQTSIRNVLRAKVANCYDDNGQVEVQLEIGGRTLWARISPWARDELNIKPGLWLYAQVKSVSITA.

One can recognise an ABC transporter domain in the interval 1 to 229 (MLELNFSQTL…SVMHPWLPKE (229 aa)). Residue 31 to 38 (GVSGAGKT) participates in ATP binding. Positions 289–352 (QTSIRNVLRA…AQVKSVSITA (64 aa)) constitute a Mop domain.

Belongs to the ABC transporter superfamily. Molybdate importer (TC 3.A.1.8) family. The complex is composed of two ATP-binding proteins (ModC), two transmembrane proteins (ModB) and a solute-binding protein (ModA).

It localises to the cell inner membrane. It carries out the reaction molybdate(out) + ATP + H2O = molybdate(in) + ADP + phosphate + H(+). In terms of biological role, part of the ABC transporter complex ModABC involved in molybdenum import. Responsible for energy coupling to the transport system. This Salmonella typhi protein is Molybdenum import ATP-binding protein ModC.